Here is a 64-residue protein sequence, read N- to C-terminus: Putative antitoxin AF_1074 (64 aa).

It belongs to the UPF0165 family.

Possibly the antitoxin component of a type II toxin-antitoxin (TA) system. This is Putative antitoxin AF_1074 from Archaeoglobus fulgidus (strain ATCC 49558 / DSM 4304 / JCM 9628 / NBRC 100126 / VC-16).